The chain runs to 436 residues: [Pyruvate dehydrogenase (acetyl-transferring)] kinase isozyme 1, mitochondrial (436 aa).

The N-terminal 28 residues, 1-28 (MRLARLLRGAALAGPGPGLRAAGFSRSF), are a transit peptide targeting the mitochondrion. Tyrosine 136 is modified (phosphotyrosine; by FGFR1). A Histidine kinase domain is found at 163–393 (YKESFGVDPV…DAVIYIKALS (231 aa)). The residue at position 243 (tyrosine 243) is a Phosphotyrosine; by FGFR1, ABL1, FLT3 and JAK2. Residue tyrosine 244 is modified to Phosphotyrosine; by FGFR1. ATP-binding positions include 279 to 286 (ELFKNAMR), aspartate 318, 337 to 338 (ST), and 354 to 359 (GFGYGL). Threonine 338 carries the phosphothreonine modification. Lysine 405 carries the N6-succinyllysine modification.

This sequence belongs to the PDK/BCKDK protein kinase family. In terms of assembly, homodimer, and heterodimer with PDK2. Interacts with the pyruvate dehydrogenase complex subunit DLAT, and is part of the multimeric pyruvate dehydrogenase complex that contains multiple copies of pyruvate dehydrogenase (E1), dihydrolipoamide acetyltransferase (DLAT, E2) and lipoamide dehydrogenase (DLD, E3). Interacts with phosphoglycerate kinase PGK1; the interaction is direct, occurs under hypoxic conditions and leads to PDK1-mediated inhibition of pyruvate dehydrogenase complex activity. Phosphorylated by constitutively activated ABL1, FGFR1, FLT3 and JAK2 (in vitro), and this may also occur in cancer cells that express constitutively activated ABL1, FGFR1, FLT3 and JAK2. Phosphorylation at Tyr-243 and Tyr-244 strongly increases kinase activity, while phosphorylation at Tyr-136 has a lesser effect. Phosphorylated under hypoxic conditions at Thr-338 by phosphoglycerate kinase PGK1 which has an activating effect. In terms of tissue distribution, expressed predominantly in the heart. Detected at lower levels in liver, skeletal muscle and pancreas.

The protein localises to the mitochondrion matrix. The catalysed reaction is L-seryl-[pyruvate dehydrogenase E1 alpha subunit] + ATP = O-phospho-L-seryl-[pyruvate dehydrogenase E1 alpha subunit] + ADP + H(+). With respect to regulation, activity is enhanced by binding to the pyruvate dehydrogenase subunit DLAT. Inhibited by AZD7545; this compound interferes with DLAT binding and thereby inhibits kinase activity. Inhibited by dichloroacetate and radicicol. Activated under hypoxic conditions by phosphoglycerate kinase PGK1-mediated phosphorylation at Thr-338. Its function is as follows. Kinase that plays a key role in regulation of glucose and fatty acid metabolism and homeostasis via phosphorylation of the pyruvate dehydrogenase subunits PDHA1 and PDHA2. This inhibits pyruvate dehydrogenase activity, and thereby regulates metabolite flux through the tricarboxylic acid cycle, down-regulates aerobic respiration and inhibits the formation of acetyl-coenzyme A from pyruvate. Plays an important role in cellular responses to hypoxia and is important for cell proliferation under hypoxia. The sequence is that of [Pyruvate dehydrogenase (acetyl-transferring)] kinase isozyme 1, mitochondrial (PDK1) from Homo sapiens (Human).